The sequence spans 1347 residues: Neurofascin (1347 aa).

The first 24 residues, 1–24, serve as a signal peptide directing secretion; sequence MARQPPPPWVHAAFLLCLLSLGGA. The Extracellular segment spans residues 25-1217; it reads IEIPMDPSIQ…NQADIATQGW (1193 aa). 6 Ig-like C2-type domains span residues 41-137, 143-230, 244-332, 337-424, 429-517, and 521-603; these read PTIT…LQVS, PKEN…NPFT, PSFM…ISVR, PYWL…AFVS, PPRM…VRLE, and PTRI…QDLA. Disulfide bonds link Cys-63-Cys-118, Cys-162-Cys-213, Cys-268-Cys-316, and Cys-358-Cys-408. The N-linked (GlcNAc...) asparagine glycan is linked to Asn-305. 2 N-linked (GlcNAc...) asparagine glycosylation sites follow: Asn-409 and Asn-446. 2 disulfides stabilise this stretch: Cys-452-Cys-501 and Cys-543-Cys-592. The residue at position 481 (Tyr-481) is a Phosphotyrosine. A glycan (N-linked (GlcNAc...) asparagine) is linked at Asn-483. At Ser-485 the chain carries Phosphoserine. Fibronectin type-III domains are found at residues 630 to 725, 730 to 823, 828 to 930, and 934 to 1030; these read RPRD…TSGA, NPGD…SGED, APTE…TPEG, and APRR…PNEA. A disordered region spans residues 713 to 740; sequence PSLPSERYRTSGAPPESNPGDVKGEGTR. Residues Asn-752 and Asn-778 are each glycosylated (N-linked (GlcNAc...) asparagine). Residues 915 to 934 are disordered; it reads GDGPRSETKEFTTPEGVPSA. Basic and acidic residues predominate over residues 916–926; that stretch reads DGPRSETKEFT. 2 N-linked (GlcNAc...) asparagine glycosylation sites follow: Asn-973 and Asn-988. Disordered regions lie at residues 1011–1040 and 1090–1111; these read TQVG…PTLP and TTAA…TKIH. Positions 1024 to 1040 are enriched in pro residues; it reads PAPPNEATPTAAPPTLP. Positions 1090 to 1105 are enriched in low complexity; that stretch reads TTAAATTTTESPPTTT. Positions 1114 to 1206 constitute a Fibronectin type-III 5 domain; that stretch reads APDEQSIWNV…ITFMTSTAYT (93 aa). Residues 1218–1238 traverse the membrane as a helical segment; the sequence is FIGLMCAIALLVLILLIVCFI. At 1239–1347 the chain is on the cytoplasmic side; that stretch reads KRSRGGKYPV…SPVNAIYSLA (109 aa). The disordered stretch occupies residues 1248-1347; sequence VREKKDVPLG…SPVNAIYSLA (100 aa). Positions 1261 to 1272 are enriched in acidic residues; it reads PKEEDGSFDYSD. A phosphoserine mark is found at Ser-1267, Ser-1281, Ser-1294, Ser-1297, Ser-1333, Ser-1334, and Ser-1338. Over residues 1278 to 1291 the composition is skewed to polar residues; sequence LQGSQTSLDGTIKQ.

It belongs to the immunoglobulin superfamily. L1/neurofascin/NgCAM family. In terms of assembly, horseshoe-shaped homodimer. Probable constituent of a NFASC/NRCAM/ankyrin-G complex. Associates with the sodium channel beta-1 (SCN1B) and beta-3 (SCN3B) subunits. Interacts with GLDN/gliomedin. Interacts with MYOC.

The protein localises to the cell membrane. Its subcellular location is the cell junction. The protein resides in the paranodal septate junction. Functionally, cell adhesion, ankyrin-binding protein which may be involved in neurite extension, axonal guidance, synaptogenesis, myelination and neuron-glial cell interactions. The polypeptide is Neurofascin (NFASC) (Homo sapiens (Human)).